The primary structure comprises 46 residues: MTQRTLRGTNRRRIRVSGFRARMRTASGRQVLRRRRAKGRYRLAVS.

Residues 25–46 (TASGRQVLRRRRAKGRYRLAVS) are disordered. Positions 31-46 (VLRRRRAKGRYRLAVS) are enriched in basic residues.

It belongs to the bacterial ribosomal protein bL34 family.

This Synechococcus sp. (strain JA-3-3Ab) (Cyanobacteria bacterium Yellowstone A-Prime) protein is Large ribosomal subunit protein bL34.